Here is a 314-residue protein sequence, read N- to C-terminus: Methionyl-tRNA formyltransferase (314 aa).

113 to 116 is a (6S)-5,6,7,8-tetrahydrofolate binding site; it reads SLLP.

It belongs to the Fmt family.

The catalysed reaction is L-methionyl-tRNA(fMet) + (6R)-10-formyltetrahydrofolate = N-formyl-L-methionyl-tRNA(fMet) + (6S)-5,6,7,8-tetrahydrofolate + H(+). Functionally, attaches a formyl group to the free amino group of methionyl-tRNA(fMet). The formyl group appears to play a dual role in the initiator identity of N-formylmethionyl-tRNA by promoting its recognition by IF2 and preventing the misappropriation of this tRNA by the elongation apparatus. The sequence is that of Methionyl-tRNA formyltransferase from Pseudomonas syringae pv. tomato (strain ATCC BAA-871 / DC3000).